Here is a 637-residue protein sequence, read N- to C-terminus: tRNA 5-methylaminomethyl-2-thiouridine biosynthesis bifunctional protein MnmC (637 aa).

Positions 1-231 are tRNA (mnm(5)s(2)U34)-methyltransferase; the sequence is MPIDPARLAF…KRQMCRGRHR (231 aa). Positions 250–637 are FAD-dependent cmnm(5)s(2)U34 oxidoreductase; it reads IGAGLAGSST…RPARGMTREG (388 aa).

In the N-terminal section; belongs to the methyltransferase superfamily. tRNA (mnm(5)s(2)U34)-methyltransferase family. The protein in the C-terminal section; belongs to the DAO family. FAD serves as cofactor.

It localises to the cytoplasm. It catalyses the reaction 5-aminomethyl-2-thiouridine(34) in tRNA + S-adenosyl-L-methionine = 5-methylaminomethyl-2-thiouridine(34) in tRNA + S-adenosyl-L-homocysteine + H(+). Functionally, catalyzes the last two steps in the biosynthesis of 5-methylaminomethyl-2-thiouridine (mnm(5)s(2)U) at the wobble position (U34) in tRNA. Catalyzes the FAD-dependent demodification of cmnm(5)s(2)U34 to nm(5)s(2)U34, followed by the transfer of a methyl group from S-adenosyl-L-methionine to nm(5)s(2)U34, to form mnm(5)s(2)U34. This is tRNA 5-methylaminomethyl-2-thiouridine biosynthesis bifunctional protein MnmC from Aromatoleum aromaticum (strain DSM 19018 / LMG 30748 / EbN1) (Azoarcus sp. (strain EbN1)).